Here is a 122-residue protein sequence, read N- to C-terminus: Small ribosomal subunit protein bS6 (122 aa).

The segment at 99 to 122 (PSPMMKEVAREEAKKAAAQTEQAA) is disordered.

Belongs to the bacterial ribosomal protein bS6 family.

Its function is as follows. Binds together with bS18 to 16S ribosomal RNA. The sequence is that of Small ribosomal subunit protein bS6 from Ralstonia pickettii (strain 12J).